Consider the following 118-residue polypeptide: UPF0102 protein Sde_3146 (118 aa).

Belongs to the UPF0102 family.

The sequence is that of UPF0102 protein Sde_3146 from Saccharophagus degradans (strain 2-40 / ATCC 43961 / DSM 17024).